Reading from the N-terminus, the 376-residue chain is 12-oxophytodienoate reductase 1 (376 aa).

FMN is bound by residues 35 to 37 (PLT), Ala68, and Gln110. Residues Ser143 and 187 to 190 (HGAH) contribute to the substrate site. The active-site Proton donor is the Tyr192. Arg239 contributes to the FMN binding site. Arg279 provides a ligand contact to substrate. FMN is bound by residues Gly309 and 330 to 331 (GR).

The protein belongs to the NADH:flavin oxidoreductase/NADH oxidase family. FMN serves as cofactor. In terms of tissue distribution, constitutively expressed in roots, leaves, cotyledons, cells culture and to a lower extent in flowers.

It localises to the cytoplasm. The enzyme catalyses (1S,2S)-OPC-8 + NADP(+) = (9S,13S,15Z)-12-oxophyto-10,15-dienoate + NADPH + H(+). It participates in lipid metabolism; oxylipin biosynthesis. Functionally, specifically cleaves olefinic bonds in alpha,beta-unsaturated carbonyls and may be involved in detoxification or modification of these reactive compounds. May be involved in the biosynthesis or metabolism of oxylipin signaling molecules. In vitro, reduces 9R,13R-12-oxophyodienoic acid (9R,13R-OPDA) to 9R,13R-OPC-8:0, but not 9S,13S-OPDA, the natural precursor of jasmonic acid. Also reduces N-ethylmaleimide and maleic acid. In Solanum lycopersicum (Tomato), this protein is 12-oxophytodienoate reductase 1 (OPR1).